Consider the following 825-residue polypeptide: Interleukin-4 receptor subunit alpha (825 aa).

An N-terminal signal peptide occupies residues 1 to 25; sequence MGWLCSGLLFPVSCLVLLQVASSGN. Residues 26–232 lie on the Extracellular side of the membrane; the sequence is MKVLQEPTCV…NSYREPFEQH (207 aa). C34 and C44 are joined by a disulfide. N53 carries N-linked (GlcNAc...) asparagine glycosylation. The cysteines at positions 74 and 86 are disulfide-linked. 5 N-linked (GlcNAc...) asparagine glycosylation sites follow: N98, N128, N134, N176, and N209. One can recognise a Fibronectin type-III domain in the interval 125–224; it reads APGNLTVHTN…WSPSTKWHNS (100 aa). Residues 212 to 216 carry the WSXWS motif motif; that stretch reads WSEWS. A helical transmembrane segment spans residues 233–256; that stretch reads LLLGVSVSCIVILAVCLLCYVSIT. Over 257-825 the chain is Cytoplasmic; it reads KIKKEWWDQI…SVGPTYMRVS (569 aa). Residues 262–270 carry the Box 1 motif motif; the sequence is WWDQIPNPA. Disordered stretches follow at residues 373–397 and 433–485; these read EEEE…DFQE and LPPS…LTCT. The segment at 437 to 557 is required for IRS1 activation and IL4-induced cell growth; sequence GSTSAHMPWD…ETWEQILRRN (121 aa). Residues 475–485 show a composition bias toward polar residues; that stretch reads PTQSPDNLTCT. Phosphotyrosine occurs at positions 497, 575, 603, and 631. Positions 558 to 657 are required for IL4-induced gene expression; that stretch reads VLQHGAAAAP…VPVPLFTFGL (100 aa). The disordered stretch occupies residues 651–703; that stretch reads PLFTFGLDREPPRSPQSSHLPSSSPEHLGLEPGEKVEDMPKPPLPQEQATDPL. Positions 665–677 are enriched in low complexity; the sequence is PQSSHLPSSSPEH. The segment covering 678–690 has biased composition (basic and acidic residues); that stretch reads LGLEPGEKVEDMP. The ITIM motif signature appears at 711-716; sequence IVYSAL. Residues 782 to 809 form a disordered region; that stretch reads PSGISEKSKSSSSFHPAPGNAQSSSQTP.

This sequence belongs to the type I cytokine receptor family. Type 4 subfamily. The functional IL4 receptor is formed by initial binding of IL4 to IL4R. Subsequent recruitment to the complex of the common gamma chain, in immune cells, creates a type I receptor and, in non-immune cells, of IL13RA1 forms a type II receptor. IL4R can also interact with the IL13/IL13RA1 complex to form a similar type II receptor. Interacts with PIK3C3. Interacts with the SH2-containing phosphatases, PTPN6/SHIP1, PTPN11/SHIP2 and INPP5D/SHIP. Interacts with JAK1 through a Box 1-containing region; inhibited by SOCS5. Interacts with SOCS5; inhibits IL4 signaling. Interacts with JAK3. Interacts with CLM1. Interacts with IL13RA2. Post-translationally, on IL4 binding, phosphorylated on C-terminal tyrosine residues. Phosphorylation on any one of tyrosine residues, Tyr-575, Tyr-603 or Tyr-631, is required for STAT6-induced gene induction. The soluble form (sIL4R/IL4BP) can also be produced by proteolytic cleavage at the cell surface (shedding) by a metalloproteinase. As to expression, isoform 1 and isoform 2 are highly expressed in activated T-cells.

It is found in the cell membrane. The protein localises to the secreted. In terms of biological role, receptor for both interleukin 4 and interleukin 13. Couples to the JAK1/2/3-STAT6 pathway. The IL4 response is involved in promoting Th2 differentiation. The IL4/IL13 responses are involved in regulating IgE production and, chemokine and mucus production at sites of allergic inflammation. In certain cell types, can signal through activation of insulin receptor substrates, IRS1/IRS2. Functionally, soluble IL4R (sIL4R) inhibits IL4-mediated cell proliferation and IL5 up-regulation by T-cells. The chain is Interleukin-4 receptor subunit alpha (IL4R) from Homo sapiens (Human).